A 72-amino-acid polypeptide reads, in one-letter code: Translation initiation factor IF-1 (72 aa).

An S1-like domain is found at 1 to 72; it reads MAKQDVIELE…TRGRITYRYK (72 aa).

It belongs to the IF-1 family. Component of the 30S ribosomal translation pre-initiation complex which assembles on the 30S ribosome in the order IF-2 and IF-3, IF-1 and N-formylmethionyl-tRNA(fMet); mRNA recruitment can occur at any time during PIC assembly.

It is found in the cytoplasm. One of the essential components for the initiation of protein synthesis. Stabilizes the binding of IF-2 and IF-3 on the 30S subunit to which N-formylmethionyl-tRNA(fMet) subsequently binds. Helps modulate mRNA selection, yielding the 30S pre-initiation complex (PIC). Upon addition of the 50S ribosomal subunit IF-1, IF-2 and IF-3 are released leaving the mature 70S translation initiation complex. The polypeptide is Translation initiation factor IF-1 (Staphylococcus aureus (strain USA300 / TCH1516)).